A 380-amino-acid chain; its full sequence is Kappa-type opioid receptor (380 aa).

Topologically, residues 1-57 (MGRRRQGPAQPASELPARNACLLPNGSAWLPGWAEPDGNGSAGPQDEQLEPAHISPA) are extracellular. Asn-25 and Asn-39 each carry an N-linked (GlcNAc...) asparagine glycan. Residues 58 to 85 (IPVIITAVYSVVFVVGLVGNSLVMFVII) traverse the membrane as a helical segment. The Cytoplasmic portion of the chain corresponds to 86–95 (RYTKMKTATN). A helical transmembrane segment spans residues 96–119 (IYIFNLALADALVTTTMPFQSTVY). Topologically, residues 120 to 132 (LMNSWPFGDVLCK) are extracellular. Cys-131 and Cys-210 form a disulfide bridge. A helical membrane pass occupies residues 133-154 (IVISIDYYNMFTSIFTLTMMSV). Residues 155 to 173 (DRYIAVCHPVKALDFRTPL) lie on the Cytoplasmic side of the membrane. The helical transmembrane segment at 174–196 (KAKIINICIWLLSSSVGISAIIL) threads the bilayer. At 197-222 (GGTKVREDVDIIECSLQFPDDDYSWW) the chain is on the extracellular side. A helical membrane pass occupies residues 223–247 (DLFMKICVFVFAFVIPVLIIIVCYT). Over 248 to 274 (LMILRLKSVRLLSGSREKDRNLRRITR) the chain is Cytoplasmic. Residues 275 to 296 (LVLVVVAVFIICWTPIHIFILV) traverse the membrane as a helical segment. Topologically, residues 297–311 (EALGSTSHSTAALSS) are extracellular. The helical transmembrane segment at 312 to 333 (YYFCIALGYTNSSLNPILYAFL) threads the bilayer. Residues 334–380 (DENFKRCFRDFCFPIKMRMERQSTSRVRNTVQDPAYMRNVDGVNKPV) lie on the Cytoplasmic side of the membrane. The S-palmitoyl cysteine moiety is linked to residue Cys-345.

This sequence belongs to the G-protein coupled receptor 1 family. In terms of assembly, interacts with NHERF1. Interacts with GABARAPL1.

It is found in the cell membrane. G-protein coupled opioid receptor that functions as a receptor for endogenous alpha-neoendorphins and dynorphins, but has low affinity for beta-endorphins. Also functions as a receptor for various synthetic opioids and for the psychoactive diterpene salvinorin A. Ligand binding causes a conformation change that triggers signaling via guanine nucleotide-binding proteins (G proteins) and modulates the activity of down-stream effectors, such as adenylate cyclase. Signaling leads to the inhibition of adenylate cyclase activity. Inhibits neurotransmitter release by reducing calcium ion currents and increasing potassium ion conductance. Plays a role in the perception of pain. Plays a role in mediating reduced physical activity upon treatment with synthetic opioids. Plays a role in the regulation of salivation in response to synthetic opioids. May play a role in arousal and regulation of autonomic and neuroendocrine functions. This is Kappa-type opioid receptor (OPRK1) from Cavia porcellus (Guinea pig).